Consider the following 351-residue polypeptide: Pleckstrin (351 aa).

In terms of domain architecture, PH 1 spans 4 to 101 (KRIREGYLVK…WVRDTKKAIK (98 aa)). Residue Lys64 is modified to N6-acetyllysine. Ser113 and Ser117 each carry phosphoserine. The DEP domain occupies 136–221 (IEKGIKELNL…NPDAFYYFPD (86 aa)). The PH 2 domain maps to 244-348 (VIIKQGCLLK…WIKAIQVASR (105 aa)).

Its function is as follows. Major protein kinase C substrate of platelets. This chain is Pleckstrin (PLEK), found in Canis lupus familiaris (Dog).